Reading from the N-terminus, the 392-residue chain is Outer membrane protein assembly factor BamB (392 aa).

Residues M1–G19 form the signal peptide. C20 is lipidated: N-palmitoyl cysteine. A lipid anchor (S-diacylglycerol cysteine) is attached at C20.

It belongs to the BamB family. As to quaternary structure, part of the Bam complex, which is composed of the outer membrane protein BamA, and four lipoproteins BamB, BamC, BamD and BamE.

It is found in the cell outer membrane. Its function is as follows. Part of the outer membrane protein assembly complex, which is involved in assembly and insertion of beta-barrel proteins into the outer membrane. The sequence is that of Outer membrane protein assembly factor BamB from Salmonella typhimurium (strain LT2 / SGSC1412 / ATCC 700720).